The sequence spans 356 residues: Zinc finger protein 830 (356 aa).

Positions 11 to 33 (AQEELRKLMKAKQRESSSKKRIE) form a coiled coil. Residues 47 to 69 (CVVCNSLIKSELLWPAHILGKQH) form a C2H2-type zinc finger. Positions 71–195 (EKVAELKGTK…PTSSADNLPA (125 aa)) are disordered. The span at 80-90 (KATTSSPSNTI) shows a compositional bias: polar residues. Basic and acidic residues-rich tracts occupy residues 99-118 (KGSE…EDHP) and 125-135 (LPEEFFEKEKT). The segment covering 150-165 (DYEDVDDDDAEEGEEY) has biased composition (acidic residues). The stretch at 278–322 (AEEDEEGRLDRQIDEIDEQIQCYRRVEHLRDRKDTLQDAKMEVLK) forms a coiled coil.

It localises to the nucleus. Its subcellular location is the chromosome. The protein localises to the nucleus speckle. Its function is as follows. May act as an important regulator of the cell cycle that participates in the maintenance of genome integrity. The protein is Zinc finger protein 830 of Xenopus laevis (African clawed frog).